The following is a 201-amino-acid chain: Ran-specific GTPase-activating protein 1 (201 aa).

Composition is skewed to basic and acidic residues over residues 1–17 (MSSE…EEAA) and 32–66 (KKAE…IHFE). Residues 1 to 66 (MSSEDKKPVV…APESPDIHFE (66 aa)) are disordered. The residue at position 60 (S60) is a Phosphoserine. A RanBD1 domain is found at 64-200 (HFEPVVHLEK…FEKAQEINKK (137 aa)).

This sequence belongs to the RANBP1 family. In terms of assembly, interacts with GSP1 and PRP20.

The protein resides in the cytoplasm. It localises to the nucleus. Functionally, important for the export of protein containing nuclear export signal (NES) out of the nucleus. Stimulates the GTPase activity of GSP1 and GSP2. The chain is Ran-specific GTPase-activating protein 1 (YRB1) from Saccharomyces cerevisiae (strain ATCC 204508 / S288c) (Baker's yeast).